A 259-amino-acid chain; its full sequence is uncharacterized protein (259 aa).

A run of 3 helical transmembrane segments spans residues 55–75 (ILIL…SYLI), 85–105 (FPSI…FFSS), and 127–147 (FFFA…LCCG).

It localises to the membrane. This is an uncharacterized protein from Arabidopsis thaliana (Mouse-ear cress).